We begin with the raw amino-acid sequence, 476 residues long: Glycogen synthase (476 aa).

Residue lysine 15 participates in ADP-alpha-D-glucose binding.

The protein belongs to the glycosyltransferase 1 family. Bacterial/plant glycogen synthase subfamily.

It catalyses the reaction [(1-&gt;4)-alpha-D-glucosyl](n) + ADP-alpha-D-glucose = [(1-&gt;4)-alpha-D-glucosyl](n+1) + ADP + H(+). The protein operates within glycan biosynthesis; glycogen biosynthesis. Its function is as follows. Synthesizes alpha-1,4-glucan chains using ADP-glucose. This is Glycogen synthase from Streptococcus agalactiae serotype III (strain NEM316).